Here is a 373-residue protein sequence, read N- to C-terminus: Phosphoserine aminotransferase (373 aa).

Arg46 is an L-glutamate binding site. Pyridoxal 5'-phosphate-binding residues include Phe104, Thr150, Asp172, and Gln195. Lys196 carries the N6-(pyridoxal phosphate)lysine modification. 247–248 serves as a coordination point for pyridoxal 5'-phosphate; it reads NT.

Belongs to the class-V pyridoxal-phosphate-dependent aminotransferase family. SerC subfamily. As to quaternary structure, homodimer. Pyridoxal 5'-phosphate serves as cofactor.

Its subcellular location is the cytoplasm. The catalysed reaction is O-phospho-L-serine + 2-oxoglutarate = 3-phosphooxypyruvate + L-glutamate. It carries out the reaction 4-(phosphooxy)-L-threonine + 2-oxoglutarate = (R)-3-hydroxy-2-oxo-4-phosphooxybutanoate + L-glutamate. It functions in the pathway amino-acid biosynthesis; L-serine biosynthesis; L-serine from 3-phospho-D-glycerate: step 2/3. The protein operates within cofactor biosynthesis; pyridoxine 5'-phosphate biosynthesis; pyridoxine 5'-phosphate from D-erythrose 4-phosphate: step 3/5. Functionally, catalyzes the reversible conversion of 3-phosphohydroxypyruvate to phosphoserine and of 3-hydroxy-2-oxo-4-phosphonooxybutanoate to phosphohydroxythreonine. In Rhodococcus jostii (strain RHA1), this protein is Phosphoserine aminotransferase.